The sequence spans 29 residues: Lambda-theraphotoxin-Ec2c (29 aa).

3 disulfide bridges follow: Cys2-Cys16, Cys9-Cys21, and Cys15-Cys25.

It belongs to the neurotoxin 30 (phrixotoxin) family. Expressed by the venom gland.

The protein localises to the secreted. Both insecticidal and vertebrate neurotoxin that potently blocks insect calcium-activated potassium (BKCa) channels (Slo-type) in cockroach dorsal unpaired median (DUM) neurons (IC(50)=24.6 nM). This occurs in the absence of any shifts in the voltage dependence of activation. May interact with the turret and/or loop region of the external entrance to the channel and does not project deeply into the pore of the channel. Also shows toxicity to mice by introcerebroventicular injection. This is Lambda-theraphotoxin-Ec2c from Eucratoscelus constrictus (African red-rump baboon spider).